The primary structure comprises 361 residues: NADP-dependent alcohol dehydrogenase 7 (361 aa).

Cys-46 provides a ligand contact to Zn(2+). Residues Gly-47 and His-51 each coordinate NADP(+). Positions 68, 100, 103, 106, 114, and 164 each coordinate Zn(2+). Ile-189, Gly-191, Ile-192, Ser-211, Arg-212, Lys-216, Cys-251, Ser-253, Ser-256, Ile-276, Ser-300, and Ile-302 together coordinate NADP(+). At Ser-316 the chain carries Phosphoserine. Arg-349 provides a ligand contact to NADP(+).

Belongs to the zinc-containing alcohol dehydrogenase family. In terms of assembly, homodimer. The cofactor is Zn(2+).

The enzyme catalyses a primary alcohol + NADP(+) = an aldehyde + NADPH + H(+). It catalyses the reaction (E)-cinnamyl alcohol + NADP(+) = (E)-cinnamaldehyde + NADPH + H(+). The catalysed reaction is 3-methylbutanol + NADP(+) = 3-methylbutanal + NADPH + H(+). Its function is as follows. NADP-dependent alcohol dehydrogenase with a broad substrate specificity. The oxidative reactions are more than 100 times less efficient than the corresponding reductions, suggesting that the enzyme acts as an aldehyde reductase, rather than as an alcohol dehydrogenase. The polypeptide is NADP-dependent alcohol dehydrogenase 7 (ADH7) (Saccharomyces cerevisiae (strain ATCC 204508 / S288c) (Baker's yeast)).